The chain runs to 96 residues: Pterin-4-alpha-carbinolamine dehydratase (96 aa).

The protein belongs to the pterin-4-alpha-carbinolamine dehydratase family.

It localises to the spore wall. It carries out the reaction (4aS,6R)-4a-hydroxy-L-erythro-5,6,7,8-tetrahydrobiopterin = (6R)-L-erythro-6,7-dihydrobiopterin + H2O. Has a role in spore wall formation. The sequence is that of Pterin-4-alpha-carbinolamine dehydratase (omt2) from Schizosaccharomyces pombe (strain 972 / ATCC 24843) (Fission yeast).